A 518-amino-acid chain; its full sequence is Serine/threonine-protein kinase UL13 (518 aa).

The segment at 1-119 is disordered; that stretch reads MDESRRQRPA…QAALTAPPSS (119 aa). The Protein kinase domain occupies 151–518; the sequence is PGARSFGGSG…TNPCARHALS (368 aa). ATP-binding positions include 157–165 and lysine 176; that span reads GGSGGYGDV. The active-site Proton acceptor is aspartate 277.

This sequence belongs to the protein kinase superfamily. Ser/Thr protein kinase family. Post-translationally, autophosphorylated.

Its subcellular location is the virion tegument. It is found in the host nucleus. It catalyses the reaction L-seryl-[protein] + ATP = O-phospho-L-seryl-[protein] + ADP + H(+). The enzyme catalyses L-threonyl-[protein] + ATP = O-phospho-L-threonyl-[protein] + ADP + H(+). Functionally, multifunctional serine/threonine kinase that plays a role in several processes including egress of virus particles from the nucleus, modulation of the actin cytoskeleton and regulation of viral and cellular gene expression. Regulates the nuclear localization of viral envelopment factors UL34 and UL31, by phosphorylating the US3 kinase, indicating a role in nuclear egress. Disrupts host nuclear lamins, including LMNA and LMNB1. Phosphorylates the viral Fc receptor composed of glycoproteins E (gE) and I (gI). Phosphorylation of glycoprotein E (gE) by UL13 alters its subcellular localization, from the host early endosome to the plasma membrane. Participates in the transcriptional regulation of cellular and viral mRNAs mainly by phosphorylating the viral transcriptional regulator ICP22. Additional substrates have been identified, including UL41, UL49 or host EF1D. The chain is Serine/threonine-protein kinase UL13 from Homo sapiens (Human).